The sequence spans 440 residues: Histidinol dehydrogenase (440 aa).

NAD(+) is bound by residues tyrosine 136, glutamine 197, and asparagine 220. Residues serine 243, glutamine 265, and histidine 268 each coordinate substrate. Residues glutamine 265 and histidine 268 each coordinate Zn(2+). Active-site proton acceptor residues include glutamate 333 and histidine 334. Residues histidine 334, aspartate 367, glutamate 421, and histidine 426 each coordinate substrate. Residue aspartate 367 coordinates Zn(2+). Histidine 426 is a Zn(2+) binding site.

Belongs to the histidinol dehydrogenase family. Zn(2+) serves as cofactor.

The catalysed reaction is L-histidinol + 2 NAD(+) + H2O = L-histidine + 2 NADH + 3 H(+). It participates in amino-acid biosynthesis; L-histidine biosynthesis; L-histidine from 5-phospho-alpha-D-ribose 1-diphosphate: step 9/9. Functionally, catalyzes the sequential NAD-dependent oxidations of L-histidinol to L-histidinaldehyde and then to L-histidine. This chain is Histidinol dehydrogenase, found in Pseudomonas aeruginosa (strain ATCC 15692 / DSM 22644 / CIP 104116 / JCM 14847 / LMG 12228 / 1C / PRS 101 / PAO1).